The sequence spans 391 residues: Apolipoprotein A-IV (391 aa).

Positions 1–20 are cleaved as a signal peptide; sequence MFLKAVVLTVALVAITGTQA. 13 consecutive repeat copies span residues 33–54, 60–81, 82–103, 115–136, 137–158, 159–180, 181–202, 203–224, 225–246, 247–268, 269–286, 287–308, and 309–330. The tract at residues 33–330 is 13 X 22 AA approximate tandem repeats; that stretch reads DYFTQLSNNA…QMEKFRQQLG (298 aa). Position 333 is a phosphoserine (Ser333). The disordered stretch occupies residues 354–391; sequence FMSTLQKKGSPDQPLALPLPEQVQEQVQEQVQPKPLES. Residues 371–391 show a composition bias toward low complexity; sequence PLPEQVQEQVQEQVQPKPLES.

It belongs to the apolipoprotein A1/A4/E family. In terms of assembly, homodimer. Secreted in plasma.

It localises to the secreted. Its function is as follows. May have a role in chylomicrons and VLDL secretion and catabolism. Required for efficient activation of lipoprotein lipase by ApoC-II; potent activator of LCAT. Apoa-IV is a major component of HDL and chylomicrons. The chain is Apolipoprotein A-IV (Apoa4) from Rattus norvegicus (Rat).